We begin with the raw amino-acid sequence, 148 residues long: Deoxyuridine 5'-triphosphate nucleotidohydrolase (148 aa).

Substrate contacts are provided by residues 68-70 (RSG), Asn-81, 85-87 (TID), and Lys-95.

The protein belongs to the dUTPase family. It depends on Mg(2+) as a cofactor.

The enzyme catalyses dUTP + H2O = dUMP + diphosphate + H(+). It functions in the pathway pyrimidine metabolism; dUMP biosynthesis; dUMP from dCTP (dUTP route): step 2/2. This enzyme is involved in nucleotide metabolism: it produces dUMP, the immediate precursor of thymidine nucleotides and it decreases the intracellular concentration of dUTP so that uracil cannot be incorporated into DNA. The polypeptide is Deoxyuridine 5'-triphosphate nucleotidohydrolase (Rickettsia prowazekii (strain Madrid E)).